Reading from the N-terminus, the 349-residue chain is MNVLGIETTCDETAAAIVAAAEDGRGVIRANEVLSQIAEHAAYGGVVPEIAARAHVEVLDRLIARALHETGLVFDDLDGIAVAAGPGLIGGVLVGLVTAKTLALVTRKPLLAVNHLEAHALTARLTEGIGFPYLLLLASGGHTQLVAVKGVGEYLRLGTTIDDAIGEAFDKVAKLLGLAYPGGPEVERAAETGNPERFALPRPMLGRREPNFSLSGLKTALRLEAERIAPLTNQDVADLCASFQAAIVDVVVDRVRGALRAFGDVAGHPTALVAAGGVAANGALRRALTQLAGEAGLPLVAPPLPLCGDNGAMIAWAGLERLRLGLIDDITAPARPRWPFAEALPATAG.

Residues His115 and His119 each contribute to the Fe cation site. Substrate-binding positions include 137–141, Asp170, Gly183, and Asn281; that span reads LASGG. Residue Asp309 coordinates Fe cation.

It belongs to the KAE1 / TsaD family. The cofactor is Fe(2+).

It is found in the cytoplasm. The catalysed reaction is L-threonylcarbamoyladenylate + adenosine(37) in tRNA = N(6)-L-threonylcarbamoyladenosine(37) in tRNA + AMP + H(+). Its function is as follows. Required for the formation of a threonylcarbamoyl group on adenosine at position 37 (t(6)A37) in tRNAs that read codons beginning with adenine. Is involved in the transfer of the threonylcarbamoyl moiety of threonylcarbamoyl-AMP (TC-AMP) to the N6 group of A37, together with TsaE and TsaB. TsaD likely plays a direct catalytic role in this reaction. The chain is tRNA N6-adenosine threonylcarbamoyltransferase from Methylobacterium nodulans (strain LMG 21967 / CNCM I-2342 / ORS 2060).